Reading from the N-terminus, the 429-residue chain is Argininosuccinate lyase (429 aa).

It belongs to the lyase 1 family. Argininosuccinate lyase subfamily.

It is found in the cytoplasm. It carries out the reaction 2-(N(omega)-L-arginino)succinate = fumarate + L-arginine. Its pathway is amino-acid biosynthesis; L-arginine biosynthesis; L-arginine from L-ornithine and carbamoyl phosphate: step 3/3. In Pyrobaculum aerophilum (strain ATCC 51768 / DSM 7523 / JCM 9630 / CIP 104966 / NBRC 100827 / IM2), this protein is Argininosuccinate lyase.